The chain runs to 787 residues: LPS-assembly protein LptD (787 aa).

The interval 1–78 is disordered; sequence MAAGLPPLVV…AAGAAPAESG (78 aa). Residues 59-78 show a composition bias toward low complexity; that stretch reads LPPVGTPAEPAAGAAPAESG.

The protein belongs to the LptD family. In terms of assembly, component of the lipopolysaccharide transport and assembly complex. Interacts with LptE and LptA.

Its function is as follows. Together with LptE, is involved in the assembly of lipopolysaccharide (LPS) at the surface of the outer membrane. The polypeptide is LPS-assembly protein LptD (Aromatoleum aromaticum (strain DSM 19018 / LMG 30748 / EbN1) (Azoarcus sp. (strain EbN1))).